Consider the following 385-residue polypeptide: Nuclear hormone receptor family member nhr-68 (385 aa).

The nuclear receptor DNA-binding region spans 4-79 (KEVCLVCQDF…VGMDKTSLQA (76 aa)). 2 NR C4-type zinc fingers span residues 7–27 (CLVC…CNGC) and 43–62 (CQFD…CRFC). Positions 81-110 (RDPIGYTKRNKKTLRHPMNELSGDESNSCT) are disordered. One can recognise an NR LBD domain in the interval 145–384 (PKRSLKQALC…SFAKELIFGD (240 aa)). Residues 373–384 (FTSFAKELIFGD) are AF-2.

Belongs to the nuclear hormone receptor family.

It localises to the nucleus. Functionally, probable transcription factor that acts in a feed-forward loop with nhr-10 to activate genes, including itself, involved in the vitamin B12-independent breakdown of the short-chain fatty acid propionate. This pathway is triggered in response to a diet low in vitamin B12, when canonical vitamin B12-dependent propionate breakdown cannot function; the resulting accumulation of propionate is probably sensed by nhr-68 and/or nhr-10. The protein is Nuclear hormone receptor family member nhr-68 of Caenorhabditis elegans.